The primary structure comprises 405 residues: L-carnitine CoA-transferase (405 aa).

Residues K97 and R104 each coordinate CoA. Catalysis depends on D169, which acts as the Nucleophile.

Belongs to the CoA-transferase III family. CaiB subfamily. In terms of assembly, homodimer.

The protein resides in the cytoplasm. It carries out the reaction crotonobetainyl-CoA + (R)-carnitine = crotonobetaine + (R)-carnitinyl-CoA. It catalyses the reaction 4-(trimethylamino)butanoyl-CoA + (R)-carnitine = (R)-carnitinyl-CoA + 4-(trimethylamino)butanoate. It participates in amine and polyamine metabolism; carnitine metabolism. Its function is as follows. Catalyzes the reversible transfer of the CoA moiety from gamma-butyrobetainyl-CoA to L-carnitine to generate L-carnitinyl-CoA and gamma-butyrobetaine. Is also able to catalyze the reversible transfer of the CoA moiety from gamma-butyrobetainyl-CoA or L-carnitinyl-CoA to crotonobetaine to generate crotonobetainyl-CoA. In Escherichia coli O157:H7, this protein is L-carnitine CoA-transferase (caiB).